Here is a 750-residue protein sequence, read N- to C-terminus: Photosystem I P700 chlorophyll a apoprotein A1 (750 aa).

The next 8 membrane-spanning stretches (helical) occupy residues 70–93 (VFSA…FHGA), 156–179 (LYCT…FHYH), 195–219 (LNHH…HVSL), 291–309 (IAHH…GHMY), 346–369 (WHAQ…HHMY), 385–411 (LSLF…IFMV), 433–455 (AIIS…LYIH), and 531–549 (FLVH…LILL). The [4Fe-4S] cluster site is built by cysteine 573 and cysteine 582. Helical transmembrane passes span 589–610 (HVFL…HFSW) and 664–686 (LSAY…MFLF). Histidine 675 serves as a coordination point for chlorophyll a'. Chlorophyll a contacts are provided by methionine 683 and tyrosine 691. Tryptophan 692 contributes to the phylloquinone binding site. A helical membrane pass occupies residues 724–744 (AVGVTHYLLGGIATTWAFFLA).

It belongs to the PsaA/PsaB family. The PsaA/B heterodimer binds the P700 chlorophyll special pair and subsequent electron acceptors. PSI consists of a core antenna complex that captures photons, and an electron transfer chain that converts photonic excitation into a charge separation. The eukaryotic PSI reaction center is composed of at least 11 subunits. Requires P700 is a chlorophyll a/chlorophyll a' dimer, A0 is one or more chlorophyll a, A1 is one or both phylloquinones and FX is a shared 4Fe-4S iron-sulfur center. as cofactor.

The protein localises to the plastid. It localises to the chloroplast thylakoid membrane. The enzyme catalyses reduced [plastocyanin] + hnu + oxidized [2Fe-2S]-[ferredoxin] = oxidized [plastocyanin] + reduced [2Fe-2S]-[ferredoxin]. In terms of biological role, psaA and PsaB bind P700, the primary electron donor of photosystem I (PSI), as well as the electron acceptors A0, A1 and FX. PSI is a plastocyanin-ferredoxin oxidoreductase, converting photonic excitation into a charge separation, which transfers an electron from the donor P700 chlorophyll pair to the spectroscopically characterized acceptors A0, A1, FX, FA and FB in turn. Oxidized P700 is reduced on the lumenal side of the thylakoid membrane by plastocyanin. The protein is Photosystem I P700 chlorophyll a apoprotein A1 of Atropa belladonna (Belladonna).